A 296-amino-acid polypeptide reads, in one-letter code: GTPase Era (296 aa).

The Era-type G domain occupies 7–174; the sequence is KCSMSAIVGT…VDYLCETSPY (168 aa). The tract at residues 15–22 is G1; that stretch reads GTTNAGKS. 15–22 contacts GTP; it reads GTTNAGKS. The segment at 41–45 is G2; the sequence is QTTRV. Positions 62–65 are G3; the sequence is DTPG. GTP contacts are provided by residues 62–66 and 124–127; these read DTPGI and NKID. Residues 124 to 127 form a G4 region; the sequence is NKID. The segment at 153–155 is G5; the sequence is ISA. The KH type-2 domain occupies 205–282; the sequence is LRHELPYSLS…HLFLFVKVRE (78 aa).

This sequence belongs to the TRAFAC class TrmE-Era-EngA-EngB-Septin-like GTPase superfamily. Era GTPase family. Monomer.

The protein resides in the cytoplasm. Its subcellular location is the cell inner membrane. Functionally, an essential GTPase that binds both GDP and GTP, with rapid nucleotide exchange. Plays a role in 16S rRNA processing and 30S ribosomal subunit biogenesis and possibly also in cell cycle regulation and energy metabolism. In Ehrlichia ruminantium (strain Gardel), this protein is GTPase Era.